An 896-amino-acid polypeptide reads, in one-letter code: Zinc finger protein 574 (896 aa).

C2H2-type zinc fingers lie at residues Tyr-16–His-38 and Tyr-76–His-98. Residue Ser-113 is modified to Phosphoserine. Residues Tyr-126–His-148 form a C2H2-type 3 zinc finger. Ser-164 is subject to Phosphoserine. A C2H2-type 4 zinc finger spans residues Tyr-214 to His-236. A disordered region spans residues Ala-239–Ala-301. Positions Pro-247–Ser-257 are enriched in polar residues. Over residues His-274–Asp-287 the composition is skewed to basic and acidic residues. Ser-298 bears the Phosphoserine mark. 4 C2H2-type zinc fingers span residues Leu-309–His-331, Phe-336–His-358, Phe-364–His-386, and His-392–His-413. The tract at residues Phe-434–Pro-460 is disordered. The segment at Tyr-466 to His-489 adopts a C2H2-type 9 zinc-finger fold. The C2H2-type 10; degenerate zinc finger occupies His-495 to His-517. C2H2-type zinc fingers lie at residues Phe-523–His-545, Tyr-551–His-573, Tyr-579–His-601, and Tyr-607–His-630. The C2H2-type 15; degenerate zinc finger occupies His-636 to Ala-659. The C2H2-type 16 zinc finger occupies Phe-667–His-689. The segment at Ala-687–Ala-733 is disordered. Positions Ala-707 to Pro-732 are enriched in low complexity. Ser-717 carries the phosphoserine modification. A Phosphothreonine modification is found at Thr-724. A Phosphoserine modification is found at Ser-728. 4 C2H2-type zinc fingers span residues Leu-738–His-760, Tyr-766–His-788, Phe-794–His-816, and Tyr-822–His-844. Position 832 is an asymmetric dimethylarginine (Arg-832).

Belongs to the krueppel C2H2-type zinc-finger protein family.

The protein localises to the nucleus. In terms of biological role, may be involved in transcriptional regulation. The polypeptide is Zinc finger protein 574 (ZNF574) (Homo sapiens (Human)).